The primary structure comprises 204 residues: Protein Nef (204 aa).

The tract at residues 1 to 27 (MGNKWSKSWPQVRDRMRRAAPAPAADG) is disordered. Residue Gly-2 is the site of N-myristoyl glycine; by host attachment. Ser-6 is subject to Phosphoserine; by host. The interval 60 to 63 (TEEE) is acidic; interacts with host PACS1 and PACS2; stabilizes the interaction of NEF/MHC-I with host AP1M1; necessary for MHC-I internalization. The segment at 67–76 (PVRPQVPLRP) is SH3-binding; interaction with Src family tyrosine kinases. The short motif at 70–73 (PQVP) is the PxxP; stabilizes the interaction of NEF/MHC-I with host AP1M1; necessary for MHC-I internalization element. Residues 106–122 (EILDLWVHNTQGYFPDW) form a mediates dimerization, Nef-PTE1 interaction region. The tract at residues 146 to 178 (VDPSEVEEANEGENNCLLHPACQHGIEDEEREV) is binding to ATP6V1H. The Dileucine internalization motif; necessary for CD4 internalization signature appears at 162-163 (LL). The Diacidic; necessary for CD4 internalization motif lies at 172-173 (ED).

It belongs to the lentivirus primate group Nef protein family. As to quaternary structure, monomer; cytosolic form. Homodimer; membrane bound form. Interacts with Nef associated p21-activated kinase (PAK2); this interaction activates PAK2. Associates with the Nef-MHC-I-AP1 complex; this complex is required for MHC-I internalization. Interacts (via C-terminus) with host PI3-kinase. Interacts with host PACS1; this interaction seems to be weak. Interacts with host PACS2. Interacts with host LCK and MAPK3; these interactions inhibit the kinase activity of the latter. Interacts with host ATP6V1H; this interaction may play a role in CD4 endocytosis. Associates with the CD4-Nef-AP2 complex; this complex is required for CD4 internalization. Interacts with host AP2 subunit alpha and AP2 subunit sigma2. Interacts with TCR-zeta chain; this interaction up-regulates the Fas ligand (FasL) surface expression. Interacts with host HCK, LYN, and SRC; these interactions activate the Src family kinases. Interacts with MAP3K5; this interaction inhibits the Fas and TNFR-mediated death signals. Interacts with beta-COP and PTE1. Interacts with human RACK1; this increases Nef phosphorylation by PKC. Interacts with TP53; this interaction decreases the half-life of TP53, protecting the infected cell against p53-mediated apoptosis. Post-translationally, the virion-associated Nef proteins are cleaved by the viral protease to release the soluble C-terminal core protein. Nef is probably cleaved concomitantly with viral structural proteins on maturation of virus particles. Myristoylated. In terms of processing, phosphorylated on serine residues, probably by host PKCdelta and theta.

The protein localises to the host cell membrane. It localises to the virion. The protein resides in the secreted. It is found in the host Golgi apparatus membrane. Functionally, factor of infectivity and pathogenicity, required for optimal virus replication. Alters numerous pathways of T-lymphocyte function and down-regulates immunity surface molecules in order to evade host defense and increase viral infectivity. Alters the functionality of other immunity cells, like dendritic cells, monocytes/macrophages and NK cells. In terms of biological role, in infected CD4(+) T-lymphocytes, down-regulates the surface MHC-I, mature MHC-II, CD4, CD28, CCR5 and CXCR4 molecules. Mediates internalization and degradation of host CD4 through the interaction of with the cytoplasmic tail of CD4, the recruitment of AP-2 (clathrin adapter protein complex 2), internalization through clathrin coated pits, and subsequent transport to endosomes and lysosomes for degradation. Diverts host MHC-I molecules to the trans-Golgi network-associated endosomal compartments by an endocytic pathway to finally target them for degradation. MHC-I down-regulation may involve AP-1 (clathrin adapter protein complex 1) or possibly Src family kinase-ZAP70/Syk-PI3K cascade recruited by PACS2. In consequence infected cells are masked for immune recognition by cytotoxic T-lymphocytes. Decreasing the number of immune receptors also prevents reinfection by more HIV particles (superinfection). Down-regulates host SERINC3 and SERINC5 thereby excluding these proteins from the viral particles. Virion infectivity is drastically higher when SERINC3 or SERINC5 are excluded from the viral envelope, because these host antiviral proteins impair the membrane fusion event necessary for subsequent virion penetration. Bypasses host T-cell signaling by inducing a transcriptional program nearly identical to that of anti-CD3 cell activation. Interaction with TCR-zeta chain up-regulates the Fas ligand (FasL). Increasing surface FasL molecules and decreasing surface MHC-I molecules on infected CD4(+) cells send attacking cytotoxic CD8+ T-lymphocytes into apoptosis. Its function is as follows. Plays a role in optimizing the host cell environment for viral replication without causing cell death by apoptosis. Protects the infected cells from apoptosis in order to keep them alive until the next virus generation is ready to strike. Inhibits the Fas and TNFR-mediated death signals by blocking MAP3K5/ASK1. Decreases the half-life of TP53, protecting the infected cell against p53-mediated apoptosis. Inhibits the apoptotic signals regulated by the Bcl-2 family proteins through the formation of a Nef/PI3-kinase/PAK2 complex that leads to activation of PAK2 and induces phosphorylation of host BAD. Functionally, extracellular Nef protein targets CD4(+) T-lymphocytes for apoptosis by interacting with CXCR4 surface receptors. The protein is Protein Nef of Homo sapiens (Human).